Reading from the N-terminus, the 176-residue chain is PPE family protein PPE57 (176 aa).

Belongs to the mycobacterial PPE family. In terms of assembly, interacts with human TLR2.

It is found in the secreted. Its subcellular location is the cell wall. The protein resides in the cell surface. Functionally, plays a key role in regulating innate and adaptive immune responses through human Toll-like receptor 2 (TLR2). Interacts with TLR2, leading to the subsequent activation of the mitogen-activated protein kinase (MAPK) and nuclear factor kappa B (NF-kappa-B) signaling pathways. Induces macrophage activation by augmenting the expression of several cell surface molecules (CD40, CD80, CD86 and MHC class II) and pro-inflammatory cytokines (TNF-alpha, IL-6 and IL-12p40) within macrophages. Also participates in adaptive immunity by directing Th1-polarised immune responses. Stimulates specific humoral and cellular immune responses in tuberculosis (TB) patients. Induces a strong IgG(1) antibody response and an increased Th1/Th2 type immune response in mice. The polypeptide is PPE family protein PPE57 (Mycobacterium tuberculosis (strain ATCC 25618 / H37Rv)).